We begin with the raw amino-acid sequence, 54 residues long: Putative ATP synthase subunit epsilon, mitochondrial (54 aa).

Belongs to the eukaryotic ATPase epsilon family. F-type ATPases have 2 components, CF(1) - the catalytic core - and CF(0) - the membrane proton channel. CF(1) has five subunits: alpha(3), beta(3), gamma(1), delta(1), epsilon(1). CF(0) seems to have nine subunits: a, b, c, d, e, f, g, F6 and 8 (or A6L).

The protein localises to the mitochondrion. It localises to the mitochondrion inner membrane. Functionally, mitochondrial membrane ATP synthase (F(1)F(0) ATP synthase or Complex V) produces ATP from ADP in the presence of a proton gradient across the membrane which is generated by electron transport complexes of the respiratory chain. F-type ATPases consist of two structural domains, F(1) - containing the extramembraneous catalytic core, and F(0) - containing the membrane proton channel, linked together by a central stalk and a peripheral stalk. During catalysis, ATP synthesis in the catalytic domain of F(1) is coupled via a rotary mechanism of the central stalk subunits to proton translocation. Part of the complex F(1) domain and of the central stalk which is part of the complex rotary element. Rotation of the central stalk against the surrounding alpha(3)beta(3) subunits leads to hydrolysis of ATP in three separate catalytic sites on the beta subunits. The polypeptide is Putative ATP synthase subunit epsilon, mitochondrial (Caenorhabditis elegans).